Here is a 433-residue protein sequence, read N- to C-terminus: Glutamate-1-semialdehyde 2,1-aminomutase (433 aa).

Lysine 270 carries the post-translational modification N6-(pyridoxal phosphate)lysine.

It belongs to the class-III pyridoxal-phosphate-dependent aminotransferase family. HemL subfamily. In terms of assembly, homodimer. Pyridoxal 5'-phosphate is required as a cofactor.

The protein localises to the cytoplasm. It catalyses the reaction (S)-4-amino-5-oxopentanoate = 5-aminolevulinate. It participates in porphyrin-containing compound metabolism; protoporphyrin-IX biosynthesis; 5-aminolevulinate from L-glutamyl-tRNA(Glu): step 2/2. In Clostridium novyi (strain NT), this protein is Glutamate-1-semialdehyde 2,1-aminomutase.